We begin with the raw amino-acid sequence, 269 residues long: Alcohol dehydrogenase-related 31 kDa protein (269 aa).

Residue 11-34 (YVADCGGIALETCKVLMTKNIAKL) participates in NAD(+) binding. Serine 139 contributes to the substrate binding site. Tyrosine 152 acts as the Proton acceptor in catalysis.

The protein belongs to the short-chain dehydrogenases/reductases (SDR) family.

The polypeptide is Alcohol dehydrogenase-related 31 kDa protein (Adhr) (Drosophila lebanonensis (Fruit fly)).